We begin with the raw amino-acid sequence, 420 residues long: MTRTAKLTIIPPGKPLSGRAMPPGSKSITNRALLLAGLAKGTSRLTGALKSDDTRYMADALRAMGVAIDEPDDTTFVVTGSGRLTPPKAPLFLGNAGTATRFLTAAAALVDGTVIVDGDEHMRKRPIGPLVEAMRKLGIDVSAETGCPPVTVRGTGRFEADRILIDGGLSSQYVSALLMMAAGGDRPVDIELVGEDIGALGYIDLTTAAMKAFGAKVEKTSPVTWRVEPTGYRAADFVIEPDASAATYLWAAEVLSDGRIDLGVPNDAFTQPDAKAYETIAKFPHLPAEIDGSQMQDAVPTIAVLAAFNETPVRFVGIANLRVKECDRIRALSSGLNNIREGLAVEEGDDLIVHSDPALAGQTLPAEIDTFADHRIAMSFALAGLKIGGITILDPDCVGKTFPAYWRTLATLGVTYRDKD.

Positions 26, 27, and 31 each coordinate 3-phosphoshikimate. Lysine 26 is a binding site for phosphoenolpyruvate. 2 residues coordinate phosphoenolpyruvate: glycine 97 and arginine 125. Positions 170, 171, 172, 297, 320, and 324 each coordinate 3-phosphoshikimate. Residue glutamine 172 coordinates phosphoenolpyruvate. Aspartate 297 (proton acceptor) is an active-site residue. Phosphoenolpyruvate contacts are provided by arginine 328, arginine 375, and lysine 400.

It belongs to the EPSP synthase family. Monomer.

It is found in the cytoplasm. The enzyme catalyses 3-phosphoshikimate + phosphoenolpyruvate = 5-O-(1-carboxyvinyl)-3-phosphoshikimate + phosphate. Its pathway is metabolic intermediate biosynthesis; chorismate biosynthesis; chorismate from D-erythrose 4-phosphate and phosphoenolpyruvate: step 6/7. Catalyzes the transfer of the enolpyruvyl moiety of phosphoenolpyruvate (PEP) to the 5-hydroxyl of shikimate-3-phosphate (S3P) to produce enolpyruvyl shikimate-3-phosphate and inorganic phosphate. The protein is 3-phosphoshikimate 1-carboxyvinyltransferase of Rhizobium etli (strain ATCC 51251 / DSM 11541 / JCM 21823 / NBRC 15573 / CFN 42).